The following is a 976-amino-acid chain: Metabotropic glutamate receptor (976 aa).

Residues 1–25 form the signal peptide; it reads MKQKNNNGTILVVVMVLSWSRVVDL. Residues 26–626 are Extracellular-facing; it reads KSPSNTHTQD…IQYMKWNSLF (601 aa). N-linked (GlcNAc...) asparagine glycosylation is found at N112 and N143. L-glutamate-binding positions include S158 and 179–181; that span reads AST. Residue N216 is glycosylated (N-linked (GlcNAc...) asparagine). Residue Y229 coordinates L-glutamate. N-linked (GlcNAc...) asparagine glycosylation occurs at N299. D310 is an L-glutamate binding site. N-linked (GlcNAc...) asparagine glycosylation occurs at N386. Position 417 (K417) interacts with L-glutamate. N-linked (GlcNAc...) asparagine glycosylation is found at N491 and N524. A helical transmembrane segment spans residues 627–649; the sequence is ALIPMAIAIFGIALTSIVIVLFA. At 650–663 the chain is on the cytoplasmic side; it reads KNHDTPLVRASGRE. A helical transmembrane segment spans residues 664–684; the sequence is LSYTLLFGILVCYCNTFALIA. At 685–695 the chain is on the extracellular side; the sequence is KPTIGSCVLQR. Residues 696–714 form a helical membrane-spanning segment; that stretch reads FGIGVGFSIIYSALLTKTN. Residues 715–738 are Cytoplasmic-facing; the sequence is RISRIFHSASKSAQRLKYISPQSQ. The helical transmembrane segment at 739–759 threads the bilayer; the sequence is VVITTSLIAIQVLITMIWMVV. The Extracellular segment spans residues 760 to 782; the sequence is EPPGTRFYYPDRREVILKCKIQD. A helical membrane pass occupies residues 783–804; it reads MSFLFSQLYNMILITICTIYAI. Over 805 to 817 the chain is Cytoplasmic; sequence KTRKIPENFNESK. A helical transmembrane segment spans residues 818-840; that stretch reads FIGFTMYTTCIIWLAFVPIYFGT. Residues 841-850 lie on the Extracellular side of the membrane; the sequence is GNSYEVQTTT. Residues 851–876 form a helical membrane-spanning segment; the sequence is LCISISLSASVALVCLYSPKVYILVF. Over 877–976 the chain is Cytoplasmic; sequence HPDKNVRKLT…VEPICHIVNK (100 aa). Residues 920-946 are disordered; the sequence is LTGGAVGTNASSSTLPTQNSPHLDEAS. Over residues 927-946 the composition is skewed to polar residues; it reads TNASSSTLPTQNSPHLDEAS.

This sequence belongs to the G-protein coupled receptor 3 family. Expressed in the neurons of the larval CNS from the beginning of the first until the third instar. Expression in the third-instar larval CNS is restricted to a discrete number of somas and projections in the brain lobes and in the ventral ganglion. In the ventral nerve cord, expression is detected both in somas and projections. Expressed in the antennal lobes, the optic lobes, the central complex and the median bundle in the adult CNS.

It localises to the cell membrane. Its function is as follows. G-protein coupled receptor for glutamate. Ligand binding causes a conformation change that triggers signaling via guanine nucleotide-binding proteins (G proteins) and modulates the activity of down-stream effectors. This is Metabotropic glutamate receptor (mGluR) from Drosophila melanogaster (Fruit fly).